We begin with the raw amino-acid sequence, 404 residues long: Tryptophan synthase beta chain (404 aa).

Position 95 is an N6-(pyridoxal phosphate)lysine (Lys-95).

It belongs to the TrpB family. As to quaternary structure, tetramer of two alpha and two beta chains. It depends on pyridoxal 5'-phosphate as a cofactor.

It carries out the reaction (1S,2R)-1-C-(indol-3-yl)glycerol 3-phosphate + L-serine = D-glyceraldehyde 3-phosphate + L-tryptophan + H2O. Its pathway is amino-acid biosynthesis; L-tryptophan biosynthesis; L-tryptophan from chorismate: step 5/5. In terms of biological role, the beta subunit is responsible for the synthesis of L-tryptophan from indole and L-serine. This Thermus thermophilus (strain ATCC BAA-163 / DSM 7039 / HB27) protein is Tryptophan synthase beta chain (trpB).